The following is a 376-amino-acid chain: Cyclin-D3-1 (376 aa).

The disordered stretch occupies residues 298-376 (KRKSHDSSSS…HLPWAIVATP (79 aa)). Residues 321–349 (NSDESSNDSWSASSCNPPTSSSSPQQQPP) show a composition bias toward low complexity. The segment covering 354–363 (RGAEENEKKK) has biased composition (basic and acidic residues).

Belongs to the cyclin family. Cyclin D subfamily. In terms of assembly, interacts with the C-terminal domain of CDKA-1. Interacts with KRP1/ICK1. Interacts with KRP6. Phosphorylated. In terms of tissue distribution, highly expressed in roots and at lower levels in leaves and flowers. Expressed in vegetative shoot meristem and inflorescence.

Involved in the control of the cell cycle at the G1/S (start) transition. Activates the G1/S phase transition in response to cytokinin hormone signal, but declines in response to sucrose starvation leading to G1 arrest. Involved in the induction of mitotic cell division. Plays an important role in the switch from cell proliferation to the final stages of differentiation during plant development. May not be involved in the activation of cell cycle in the root apical meristem (RAM) in the early phase of seed germination. Promotes divisions in the guard cells (GCs) after the guard mother cells (GMC) symmetric division. The sequence is that of Cyclin-D3-1 (CYCD3-1) from Arabidopsis thaliana (Mouse-ear cress).